The chain runs to 334 residues: Anthranilate phosphoribosyltransferase (334 aa).

5-phospho-alpha-D-ribose 1-diphosphate-binding positions include glycine 79, 82–83 (GD), serine 87, 89–92 (NIST), 107–115 (KHGNRSISS), and serine 119. Glycine 79 provides a ligand contact to anthranilate. Serine 91 is a Mg(2+) binding site. Asparagine 110 is a binding site for anthranilate. Arginine 165 is an anthranilate binding site. Mg(2+) is bound by residues aspartate 224 and glutamate 225.

The protein belongs to the anthranilate phosphoribosyltransferase family. In terms of assembly, homodimer. Mg(2+) is required as a cofactor.

It carries out the reaction N-(5-phospho-beta-D-ribosyl)anthranilate + diphosphate = 5-phospho-alpha-D-ribose 1-diphosphate + anthranilate. The protein operates within amino-acid biosynthesis; L-tryptophan biosynthesis; L-tryptophan from chorismate: step 2/5. Its function is as follows. Catalyzes the transfer of the phosphoribosyl group of 5-phosphorylribose-1-pyrophosphate (PRPP) to anthranilate to yield N-(5'-phosphoribosyl)-anthranilate (PRA). The polypeptide is Anthranilate phosphoribosyltransferase (Streptococcus gordonii (strain Challis / ATCC 35105 / BCRC 15272 / CH1 / DL1 / V288)).